Consider the following 251-residue polypeptide: MRKPIIAGNWKMNKTIGEAVDFVEAVKANVPAQATVDSVVCAPALFLDRLLQAVKGTELKIGAQTMHFEDNGAFTGEISPKALSDMGVHYVIIGHSERREMFAETDETVNKKVHAAFAHHLVPIMCCGETAEEREAGKMEAVVKEQVENGLAGLSEEQVKQTVIAYEPIWAIGTGKSATEKDANEACAYVRQTVAANFSEEAAEAIRIQYGGSVKPGNIKDYMAQPDIDGALVGGASLDADSFLELVGAAK.

9–11 (NWK) is a substrate binding site. His95 (electrophile) is an active-site residue. Glu167 functions as the Proton acceptor in the catalytic mechanism. Residues Gly173, Ser213, and 234–235 (GG) contribute to the substrate site. At Ser213 the chain carries Phosphoserine.

This sequence belongs to the triosephosphate isomerase family. As to quaternary structure, homodimer.

The protein localises to the cytoplasm. The enzyme catalyses D-glyceraldehyde 3-phosphate = dihydroxyacetone phosphate. The protein operates within carbohydrate biosynthesis; gluconeogenesis. It functions in the pathway carbohydrate degradation; glycolysis; D-glyceraldehyde 3-phosphate from glycerone phosphate: step 1/1. Its function is as follows. Involved in the gluconeogenesis. Catalyzes stereospecifically the conversion of dihydroxyacetone phosphate (DHAP) to D-glyceraldehyde-3-phosphate (G3P). In Shouchella clausii (strain KSM-K16) (Alkalihalobacillus clausii), this protein is Triosephosphate isomerase.